The following is a 346-amino-acid chain: Melatonin receptor type 1C (346 aa).

The Extracellular portion of the chain corresponds to 1 to 26 (MERPGSNGSCSGCRLEGGPAARAASG). N-linked (GlcNAc...) asparagine glycosylation is present at N7. Residues 27–47 (LAAVLIVTIVVDVLGNALVIL) traverse the membrane as a helical segment. Residues 48–60 (SVLRNKKLRNAGN) are Cytoplasmic-facing. Residues 61-81 (IFVVSLSVADLVVAVYPYPLI) form a helical membrane-spanning segment. Residues 82 to 99 (LSAIFHNGWTMGNIHCQI) lie on the Extracellular side of the membrane. The cysteines at positions 97 and 174 are disulfide-linked. The helical transmembrane segment at 100–120 (SGFLMGLSVIGSIFNITAIAI) threads the bilayer. At 121–139 (NRYCYICHSLRYDKLFNLK) the chain is on the cytoplasmic side. The chain crosses the membrane as a helical span at residues 140-160 (NTCCYICLTWTLTVVAIVPNF). The Extracellular segment spans residues 161-184 (FVGSLQYDPRIYSCTFAQTVSTSY). Residues 185–205 (TITVVVVHFIVPLSIVTFCYL) traverse the membrane as a helical segment. Residues 206–237 (RIWILVIQVKHRVRQDCKQKIRAADIRNFLTM) are Cytoplasmic-facing. The chain crosses the membrane as a helical span at residues 238–258 (FVVFVLFAVCWGPLNFIGLAV). The Extracellular segment spans residues 259–271 (SINPSKVQPHIPE). A helical transmembrane segment spans residues 272–292 (WLFVLSYFMAYFNSCLNAVIY). At 293–346 (GLLNQNFRKEYKRILLMLRTPRLLFIDVSKGGTEGLKSKPSPAVTNNNQAEIHL) the chain is on the cytoplasmic side. The interval 326–346 (EGLKSKPSPAVTNNNQAEIHL) is disordered. Residues 335–346 (AVTNNNQAEIHL) are compositionally biased toward polar residues.

The protein belongs to the G-protein coupled receptor 1 family. In terms of tissue distribution, expressed in optic tectum, neostriatum, hypothalamus, thalamus and pineal gland, less in cerebellum and retina.

The protein resides in the cell membrane. Functionally, high affinity receptor for melatonin. The activity of this receptor is mediated by pertussis toxin sensitive G proteins that inhibits adenylate cyclase activity. The protein is Melatonin receptor type 1C of Gallus gallus (Chicken).